Reading from the N-terminus, the 186-residue chain is Large ribosomal subunit protein uL10 (186 aa).

Belongs to the universal ribosomal protein uL10 family. As to quaternary structure, part of the ribosomal stalk of the 50S ribosomal subunit. The N-terminus interacts with L11 and the large rRNA to form the base of the stalk. The C-terminus forms an elongated spine to which L12 dimers bind in a sequential fashion forming a multimeric L10(L12)X complex.

In terms of biological role, forms part of the ribosomal stalk, playing a central role in the interaction of the ribosome with GTP-bound translation factors. This Roseiflexus sp. (strain RS-1) protein is Large ribosomal subunit protein uL10.